A 125-amino-acid chain; its full sequence is Small ribosomal subunit protein uS12 (125 aa).

Residue Asp-89 is modified to 3-methylthioaspartic acid. A disordered region spans residues Ser-101–Ala-125. Basic residues predominate over residues Ser-113–Ala-125.

This sequence belongs to the universal ribosomal protein uS12 family. In terms of assembly, part of the 30S ribosomal subunit. Contacts proteins S8 and S17. May interact with IF1 in the 30S initiation complex.

With S4 and S5 plays an important role in translational accuracy. Its function is as follows. Interacts with and stabilizes bases of the 16S rRNA that are involved in tRNA selection in the A site and with the mRNA backbone. Located at the interface of the 30S and 50S subunits, it traverses the body of the 30S subunit contacting proteins on the other side and probably holding the rRNA structure together. The combined cluster of proteins S8, S12 and S17 appears to hold together the shoulder and platform of the 30S subunit. This chain is Small ribosomal subunit protein uS12, found in Thiobacillus denitrificans (strain ATCC 25259 / T1).